A 248-amino-acid polypeptide reads, in one-letter code: Exosome complex component Rrp41 (248 aa).

This sequence belongs to the RNase PH family. Rrp41 subfamily. As to quaternary structure, component of the archaeal exosome complex. Forms a hexameric ring-like arrangement composed of 3 Rrp41-Rrp42 heterodimers. The hexameric ring associates with a trimer of Rrp4 and/or Csl4 subunits.

Its subcellular location is the cytoplasm. Its function is as follows. Catalytic component of the exosome, which is a complex involved in RNA degradation. Has 3'-&gt;5' exoribonuclease activity. Can also synthesize heteromeric RNA-tails. Binds RNA. This Saccharolobus solfataricus (strain ATCC 35092 / DSM 1617 / JCM 11322 / P2) (Sulfolobus solfataricus) protein is Exosome complex component Rrp41.